Consider the following 638-residue polypeptide: Threonine--tRNA ligase (638 aa).

One can recognise a TGS domain in the interval 1–61 (MPNITLPDGS…EADTPLAIVT (61 aa)). Positions 242–533 (DHRKLGRLLD…LIEHYAGALP (292 aa)) are catalytic. C333, H384, and H510 together coordinate Zn(2+).

Belongs to the class-II aminoacyl-tRNA synthetase family. Homodimer. The cofactor is Zn(2+).

It is found in the cytoplasm. The enzyme catalyses tRNA(Thr) + L-threonine + ATP = L-threonyl-tRNA(Thr) + AMP + diphosphate + H(+). Catalyzes the attachment of threonine to tRNA(Thr) in a two-step reaction: L-threonine is first activated by ATP to form Thr-AMP and then transferred to the acceptor end of tRNA(Thr). Also edits incorrectly charged L-seryl-tRNA(Thr). This Aromatoleum aromaticum (strain DSM 19018 / LMG 30748 / EbN1) (Azoarcus sp. (strain EbN1)) protein is Threonine--tRNA ligase.